A 3130-amino-acid chain; its full sequence is Reticulocyte-binding protein homolog 2a (3130 aa).

Positions 1 to 24 are cleaved as a signal peptide; the sequence is MKTTLFCSISFCNIIFFFLELSHE. Over 25–3066 the chain is Extracellular; it reads HFVGQSSNTH…FSRSKNLSVA (3042 aa). Residues asparagine 43, asparagine 105, asparagine 123, and asparagine 159 are each glycosylated (N-linked (GlcNAc...) asparagine). LRR repeat units lie at residues 182 to 206, 300 to 323, and 419 to 443; these read FTTSFYKDLDKSSITKINEDIEKFN, VMNNNLYLLRVNEVKSTPIDLYLN, and ISKLDSLFIKNEEILNNLFNNIFNI. The interval 446–557 is erythrocyte binding domain (EBD); it reads KKYETYVDMK…SLNNYIEKTD (112 aa). A coiled-coil region spans residues 490–517; the sequence is KANLDSEVVKLQIKINEKSNELDNAISQ. 6 N-linked (GlcNAc...) asparagine glycosylation sites follow: asparagine 575, asparagine 579, asparagine 635, asparagine 675, asparagine 724, and asparagine 745. The LRR 4 repeat unit spans residues 659 to 683; that stretch reads LNSLNLININDFINEKNISQEKVSY. An LRR 5 repeat occupies 757–778; sequence LSHLLSLKENIIKKLLNHIEQN. Asparagine 781 is a glycosylation site (N-linked (GlcNAc...) asparagine). An LRR 6 repeat occupies 801-824; the sequence is KEEIESLEVYKHTIGNIQKEYILH. Residues asparagine 837 and asparagine 994 are each glycosylated (N-linked (GlcNAc...) asparagine). The stretch at 1116–1139 is one LRR 7 repeat; sequence LTKLKSIHFNIDKEKYKNPKSQEN. A glycan (N-linked (GlcNAc...) asparagine) is linked at asparagine 1166. Over residues 1173–1185 the composition is skewed to basic and acidic residues; that stretch reads VNADNEKKKQKEK. A disordered region spans residues 1173–1195; it reads VNADNEKKKQKEKEEDDEQTHYS. An LRR 8 repeat occupies 1305-1328; that stretch reads FDKLKDLYENINKLTNESNGLKSD. Residues asparagine 1320 and asparagine 1332 are each glycosylated (N-linked (GlcNAc...) asparagine). An LRR 9 repeat occupies 1336–1362; sequence VDKLKEINLQVFSNLGNIIKYVEKLEN. Residues asparagine 1398 and asparagine 1409 are each glycosylated (N-linked (GlcNAc...) asparagine). The stretch at 1438-1461 is one LRR 10 repeat; it reads DDNIKSLVLKKEEISEKRKQVNKY. Asparagine 1513 is a glycosylation site (N-linked (GlcNAc...) asparagine). 2 LRR repeats span residues 1536–1561 and 1628–1652; these read IIKIENELYNLINNNIRSLKGVKYEK and SNLLNILNMKHNIDTILNKAMDYMN. N-linked (GlcNAc...) asparagine glycans are attached at residues asparagine 1705, asparagine 1742, and asparagine 1785. 2 LRR repeats span residues 1795–1818 and 1890–1913; these read MTEIINDNLDYNEIKEIKEVAQTE and LDSLNTIEEKNKSVANLEICTNKE. Residues 1805 to 1842 adopt a coiled-coil conformation; sequence YNEIKEIKEVAQTEYDKLNKKVDELKNYLNNIKEQEGH. N-linked (GlcNAc...) asparagine glycans are attached at residues asparagine 1900, asparagine 1927, and asparagine 1971. 2 LRR repeats span residues 2014–2041 and 2052–2076; these read IQKLKGDCNDLVKDCKELRELSTALYDL and ENDISNNIDIVSNKLNEIDAIQYNF. A glycan (N-linked (GlcNAc...) asparagine) is linked at asparagine 2113. Residues 2126–2152 form an LRR 17 repeat; the sequence is LDELEKSLTLSSNEMEIKTIVQNSYNS. 9 N-linked (GlcNAc...) asparagine glycosylation sites follow: asparagine 2212, asparagine 2268, asparagine 2346, asparagine 2421, asparagine 2456, asparagine 2473, asparagine 2484, asparagine 2537, and asparagine 2550. LRR repeat units follow at residues 2345–2368 and 2409–2434; these read INETQNIDILKNEFNNIKTKINDK and NVELKKVKLYIENITNLLGRINTFIK. One copy of the LRR 20 repeat lies at 2522 to 2545; it reads LFQMEEMLLNINNIMNETKRISNT. LRR repeat units follow at residues 2572-2599 and 2650-2671; these read IDKLIDHIKIHNEKIQAEILIIDDAKRK and LNELLSHNNNDIKDLGDEKLIL. The stretch at 2661–2874 forms a coiled coil; that stretch reads IKDLGDEKLI…KIELAEREQH (214 aa). Positions 2680–2753 are disordered; the sequence is RERLEKAKQE…QERLQKEEEL (74 aa). LRR repeat units follow at residues 2915–2936 and 2937–2959; these read LKHLQNILSLKIDSLLNKNDEV and IKDNETQLKTNILNSLKNQLYLN. 3 N-linked (GlcNAc...) asparagine glycosylation sites follow: asparagine 2940, asparagine 2986, and asparagine 3015. Residues 3021–3056 are disordered; it reads ITSKEKKDETESTKRSGTDHTNSSESTTDDNTNDRN. Positions 3023-3038 are enriched in basic and acidic residues; the sequence is SKEKKDETESTKRSGT. Low complexity predominate over residues 3039–3050; that stretch reads DHTNSSESTTDD. Asparagine 3042, asparagine 3056, and asparagine 3062 each carry an N-linked (GlcNAc...) asparagine glycan. The chain crosses the membrane as a helical span at residues 3067-3087; it reads IYTAGSVALCVLIFSSIGLLL. Topologically, residues 3088 to 3130 are cytoplasmic; the sequence is IKTNSGDNNSNEINEAFEPNDDVLFKEKDEIIEITFNDNDSTI.

As to quaternary structure, forms a heterodimer composed of the 285 kDa and the 85 kDa forms. Post-translationally, proteolytically processed into multiple fragments following schizont rupture. In the mature schizont stage prior to merozoite release, full length RH2b is processed post-Golgi into C-terminal 285 kDa and N-terminal 85 kDa forms. During merozoite invasion of host erythrocytes, further processing occurs generating a 140 kDa C-terminal form. At the same time, the C-terminal transmembrane region is probably cleaved, probably by a rhomboid protease, to shed all the different processed protein forms from the membrane leaving a transmembrane 7 kDa form on the merozoite surface.

Its subcellular location is the cell membrane. It localises to the cytoplasmic vesicle. The protein resides in the secretory vesicle. The protein localises to the rhoptry. It is found in the secreted. Its subcellular location is the cell junction. It localises to the tight junction. Its function is as follows. During the asexual blood stage, binds to a chymotrypsin sensitive, neuraminidase and trypsin resistant receptor on the surface of the host erythrocyte. Despite its binding capacity, appears to be dispensable for merozoite invasion of host erythrocytes. During the asexual blood stage, binds to a trypsin-resistant and chymotrypsin and neuraminidase sensitive receptor on the surface of the host erythrocyte. The sequence is that of Reticulocyte-binding protein homolog 2a from Plasmodium falciparum (isolate 3D7).